The primary structure comprises 459 residues: Zinc finger chaperone zpr1 (459 aa).

2 C4-type zinc fingers span residues 38–70 and 259–291; these read CMEC…CPHC and CPSC…CDRC.

The protein belongs to the ZPR1 family.

Its subcellular location is the cytoplasm. It is found in the nucleus. In terms of biological role, acts as a protein folding chaperone for elongation factor 1-alpha. The sequence is that of Zinc finger chaperone zpr1 from Schizosaccharomyces pombe (strain 972 / ATCC 24843) (Fission yeast).